Here is a 311-residue protein sequence, read N- to C-terminus: Malate dehydrogenase (311 aa).

NAD(+) contacts are provided by residues 7–13 (GAAGGIG) and D34. Residues R81 and R87 each contribute to the substrate site. NAD(+) is bound by residues N94 and 117 to 119 (ITN). Positions 119 and 153 each coordinate substrate. H177 acts as the Proton acceptor in catalysis. M227 is an NAD(+) binding site.

It belongs to the LDH/MDH superfamily. MDH type 1 family. As to quaternary structure, homodimer.

It carries out the reaction (S)-malate + NAD(+) = oxaloacetate + NADH + H(+). Its function is as follows. Catalyzes the reversible oxidation of malate to oxaloacetate. The sequence is that of Malate dehydrogenase from Histophilus somni (strain 2336) (Haemophilus somnus).